The following is a 574-amino-acid chain: VAO-type flavoprotein oxidase VAO615 (574 aa).

The N-terminal stretch at 1–17 is a signal peptide; sequence MPASLLRFLALAGTAVG. 4 cysteine pairs are disulfide-bonded: cysteine 28-cysteine 572, cysteine 64-cysteine 77, cysteine 108-cysteine 118, and cysteine 450-cysteine 476. Asparagine 47 carries N-linked (GlcNAc...) asparagine glycosylation. The N-linked (GlcNAc...) asparagine glycan is linked to asparagine 105. Residues 120-299 enclose the FAD-binding PCMH-type domain; that stretch reads LGNYPSYVVN…LSMTARLHRD (180 aa). Asparagine 129, asparagine 211, asparagine 310, asparagine 346, and asparagine 438 each carry an N-linked (GlcNAc...) asparagine glycan. The segment at residues 157 to 222 is a cross-link (6-(S-cysteinyl)-8alpha-(pros-histidyl)-FAD (His-Cys)); the sequence is HDYLGKSTGK…TGHRIVGGTC (66 aa).

This sequence belongs to the oxygen-dependent FAD-linked oxidoreductase family. FAD is required as a cofactor. In terms of processing, the FAD cofactor is bound via a bicovalent 6-S-cysteinyl, 8alpha-N1-histidyl FAD linkage.

Its subcellular location is the secreted. In terms of biological role, probably oxidoreductase that, when reduced, rapidly reacts with molecular oxygen, a hallmark of flavoprotein oxidases. A large panel of alcohols, including carbohydrates, steroids and secondary alcohols were tested as potential substrates, but none has been identified so far. The sequence is that of VAO-type flavoprotein oxidase VAO615 from Thermothelomyces thermophilus (strain ATCC 42464 / BCRC 31852 / DSM 1799) (Sporotrichum thermophile).